A 236-amino-acid polypeptide reads, in one-letter code: Alpha-tubulin N-acetyltransferase (236 aa).

Positions 21–201 (ASVPDGVSRW…NKFVVFHGFF (181 aa)) constitute an N-acetyltransferase domain. Acetyl-CoA is bound by residues 134 to 147 (FYVD…GYGK) and 171 to 180 (SDKLLGFMKK). The disordered stretch occupies residues 217–236 (SPTGAAAAATGTKAKNEMPG). A compositionally biased stretch (low complexity) spans 219–229 (TGAAAAATGTK).

The protein belongs to the acetyltransferase ATAT1 family.

It carries out the reaction L-lysyl-[alpha-tubulin] + acetyl-CoA = N(6)-acetyl-L-lysyl-[alpha-tubulin] + CoA + H(+). Functionally, specifically acetylates 'Lys-40' in alpha-tubulin on the lumenal side of microtubules. Promotes microtubule destabilization and accelerates microtubule dynamics; this activity may be independent of acetylation activity. Acetylates alpha-tubulin with a slow enzymatic rate, due to a catalytic site that is not optimized for acetyl transfer. Enters the microtubule through each end and diffuses quickly throughout the lumen of microtubules. Acetylates only long/old microtubules because of its slow acetylation rate since it does not have time to act on dynamically unstable microtubules before the enzyme is released. The sequence is that of Alpha-tubulin N-acetyltransferase from Leishmania braziliensis.